Consider the following 117-residue polypeptide: Large ribosomal subunit protein uL18 (117 aa).

The protein belongs to the universal ribosomal protein uL18 family. As to quaternary structure, part of the 50S ribosomal subunit; part of the 5S rRNA/L5/L18/L25 subcomplex. Contacts the 5S and 23S rRNAs.

Its function is as follows. This is one of the proteins that bind and probably mediate the attachment of the 5S RNA into the large ribosomal subunit, where it forms part of the central protuberance. The chain is Large ribosomal subunit protein uL18 from Thiobacillus denitrificans (strain ATCC 25259 / T1).